The primary structure comprises 118 residues: Small ribosomal subunit protein uS13 (118 aa).

A disordered region spans residues glycine 94–lysine 118.

The protein belongs to the universal ribosomal protein uS13 family. In terms of assembly, part of the 30S ribosomal subunit. Forms a loose heterodimer with protein S19. Forms two bridges to the 50S subunit in the 70S ribosome.

Functionally, located at the top of the head of the 30S subunit, it contacts several helices of the 16S rRNA. In the 70S ribosome it contacts the 23S rRNA (bridge B1a) and protein L5 of the 50S subunit (bridge B1b), connecting the 2 subunits; these bridges are implicated in subunit movement. Contacts the tRNAs in the A and P-sites. The sequence is that of Small ribosomal subunit protein uS13 from Stenotrophomonas maltophilia (strain R551-3).